The sequence spans 462 residues: Sensor histidine kinase ZraS (462 aa).

The Cytoplasmic segment spans residues 1–14; sequence MNVMRLSKDSVAVG. A helical transmembrane segment spans residues 15–35; the sequence is LSWLLTGLILLLVCLFSALIV. Topologically, residues 36 to 197 are periplasmic; sequence RDYGRENEAA…ADHARGLRNM (162 aa). The chain crosses the membrane as a helical span at residues 198 to 218; it reads VIMLCAAGVVMAATVLAQFWF. Residues 219–462 are Cytoplasmic-facing; sequence RRYQRSRKQL…VNGQQKDEQG (244 aa). The 209-residue stretch at 247-455 folds into the Histidine kinase domain; it reads GVAHEIRNPL…LFTFYLPVNG (209 aa). Histidine 250 is subject to Phosphohistidine; by autocatalysis.

In terms of processing, autophosphorylated.

The protein resides in the cell inner membrane. It carries out the reaction ATP + protein L-histidine = ADP + protein N-phospho-L-histidine.. With respect to regulation, activity of the ZraS/ZraR two-component system is repressed by the zinc-bound form of ZraP, which probably interacts with the periplasmic region of ZraS. Functionally, part of the Zra signaling pathway, an envelope stress response (ESR) system composed of the periplasmic accessory protein ZraP, the histidine kinase ZraS and the transcriptional regulator ZraR. The ZraPSR system contributes to antibiotic resistance and is important for membrane integrity in the presence of membrane-targeting biocides. ZraS is a member of the two-component regulatory system ZraS/ZraR. Functions as a membrane-associated sensor kinase that phosphorylates ZraR in response to high concentrations of Zn(2+) or Pb(2+) in the medium. This chain is Sensor histidine kinase ZraS (zraS), found in Klebsiella oxytoca.